The chain runs to 852 residues: Probable LRR receptor-like serine/threonine-protein kinase At1g05700 (852 aa).

The signal sequence occupies residues 1–25 (MEEFRFLYLIYSAAFALCLVVSVLA). Topologically, residues 26 to 510 (QDQSGFISID…SCRKSNSKKL (485 aa)) are extracellular. Residues asparagine 138, asparagine 182, asparagine 231, asparagine 240, asparagine 258, asparagine 293, asparagine 400, asparagine 415, and asparagine 431 are each glycosylated (N-linked (GlcNAc...) asparagine). LRR repeat units follow at residues 410–432 (RITS…FSNL), 434–457 (MIQE…SKLK), and 458–479 (FLRV…ELLE). Residue asparagine 466 is glycosylated (N-linked (GlcNAc...) asparagine). Residues 511–531 (VIPLVASFAALFILLLLSGVF) form a helical membrane-spanning segment. Residues 532–852 (WRIRNRRNKS…LQREESNKNY (321 aa)) lie on the Cytoplasmic side of the membrane. A Phosphothreonine modification is found at threonine 561. Residues 570 to 843 (NNFGQVLGKG…HIVRGLNECL (274 aa)) enclose the Protein kinase domain. ATP-binding positions include 576 to 584 (LGKGGFGTV) and lysine 597. A Phosphotyrosine modification is found at tyrosine 642. The active-site Proton acceptor is aspartate 693. A phosphoserine mark is found at serine 697 and serine 727. Residues threonine 728 and threonine 733 each carry the phosphothreonine modification.

This sequence belongs to the protein kinase superfamily. Ser/Thr protein kinase family.

The protein localises to the membrane. It catalyses the reaction L-seryl-[protein] + ATP = O-phospho-L-seryl-[protein] + ADP + H(+). The enzyme catalyses L-threonyl-[protein] + ATP = O-phospho-L-threonyl-[protein] + ADP + H(+). This is Probable LRR receptor-like serine/threonine-protein kinase At1g05700 from Arabidopsis thaliana (Mouse-ear cress).